The primary structure comprises 960 residues: Gamma-aminobutyric acid type B receptor subunit 1 (960 aa).

The signal sequence occupies residues 1–19 (MLLLLLVPLFLRPLGAGGA). The Extracellular segment spans residues 20–590 (QTPNVTSEGC…KTFRFLSQKL (571 aa)). 2 N-linked (GlcNAc...) asparagine glycosylation sites follow: asparagine 23 and asparagine 83. 2 consecutive Sushi domains span residues 29-95 (CQII…PSRC) and 97-158 (RICS…HCQV). Cystine bridges form between cysteine 99/cysteine 144, cysteine 130/cysteine 156, and cysteine 219/cysteine 245. 4-aminobutanoate is bound by residues serine 246, serine 269, histidine 286, and tyrosine 366. Cysteine 375 and cysteine 409 form a disulfide bridge. N-linked (GlcNAc...) asparagine glycans are attached at residues asparagine 408 and asparagine 439. Glutamate 465 serves as a coordination point for 4-aminobutanoate. Residues asparagine 481, asparagine 501, and asparagine 513 are each glycosylated (N-linked (GlcNAc...) asparagine). The chain crosses the membrane as a helical span at residues 591–611 (FISVSVLSSLGIVLAVVCLSF). The Cytoplasmic segment spans residues 612-630 (NIYNSHVRYIQNSQPNLNN). The chain crosses the membrane as a helical span at residues 631 to 651 (LTAVGCSLALAAVFPLGLDGY). Residues 652 to 666 (HIGRSQFPFVCQARL) lie on the Extracellular side of the membrane. Residues 667-687 (WLLGLGFSLGYGSMFTKIWWV) form a helical membrane-spanning segment. The Cytoplasmic portion of the chain corresponds to 688-709 (HTVFTKKEEKKEWRKTLEPWKL). A helical membrane pass occupies residues 710 to 730 (YATVGLLVGMDILTLAIWQIV). Topologically, residues 731-767 (DPLHRTIETFAKEEPKEDIDVSILPQLEHCSSKKMNT) are extracellular. Residues 768–788 (WLGIFYGYKGLLLLLGIFLAY) traverse the membrane as a helical segment. Over 789–803 (ETKSVSTEKINDHRA) the chain is Cytoplasmic. The helical transmembrane segment at 804–824 (VGMAIYNVAVLCLITAPVTMI) threads the bilayer. Topologically, residues 825–832 (LSSQQDAA) are extracellular. The chain crosses the membrane as a helical span at residues 833–853 (FAFASLAIVFSSYITLVVLFV). The Cytoplasmic portion of the chain corresponds to 854–960 (PKMRRLITRG…DGSRVHLLYK (107 aa)). Disordered stretches follow at residues 866–891 (QSEAQDTMKTGSSTNNNEEEKSRLLE) and 908–960 (VSEL…LLYK). The segment covering 867–879 (SEAQDTMKTGSST) has biased composition (polar residues). Residues 868 to 924 (EAQDTMKTGSSTNNNEEEKSRLLEKENRELEKIIAEKEERVSELRHQLQSRQQIRSR) adopt a coiled-coil conformation. Threonine 872 carries the phosphothreonine modification. The interval 887–915 (SRLLEKENRELEKIIAEKEERVSELRHQL) is interaction with ATF4. The residue at position 929 (threonine 929) is a Phosphothreonine.

The protein belongs to the G-protein coupled receptor 3 family. GABA-B receptor subfamily. Heterodimer of GABBR1 and GABBR2. Homodimers may form, but are inactive. Interacts (via C-terminus) with ATF4 (via leucine zipper domain). Interacts with JAKMIP1. Interacts with KCTD8, KCTD12, KCTD12B and KCTD16; this interaction determines the pharmacology and kinetics of the receptor response, the KCTD proteins markedly accelerating the GABA-B response, although to different extents. Expressed in neuronal tissue including cortex, cerebellum and spinal cord. Not detected in non-neuronal tissues including heart, liver, spleen and kidney.

It localises to the cell membrane. Its subcellular location is the postsynaptic cell membrane. The protein localises to the cell projection. It is found in the dendrite. Component of a heterodimeric G-protein coupled receptor for GABA, formed by GABBR1 and GABBR2. Within the heterodimeric GABA receptor, only GABBR1 seems to bind agonists, while GABBR2 mediates coupling to G proteins. Ligand binding causes a conformation change that triggers signaling via guanine nucleotide-binding proteins (G proteins) and modulates the activity of down-stream effectors, such as adenylate cyclase. Signaling inhibits adenylate cyclase, stimulates phospholipase A2, activates potassium channels, inactivates voltage-dependent calcium-channels and modulates inositol phospholipid hydrolysis. Calcium is required for high affinity binding to GABA. Plays a critical role in the fine-tuning of inhibitory synaptic transmission. Pre-synaptic GABA receptor inhibits neurotransmitter release by down-regulating high-voltage activated calcium channels, whereas postsynaptic GABA receptor decreases neuronal excitability by activating a prominent inwardly rectifying potassium (Kir) conductance that underlies the late inhibitory postsynaptic potentials. Not only implicated in synaptic inhibition but also in hippocampal long-term potentiation, slow wave sleep, muscle relaxation and antinociception. The chain is Gamma-aminobutyric acid type B receptor subunit 1 (Gabbr1) from Mus musculus (Mouse).